The chain runs to 492 residues: MERSPDVSPGPSRSFKEELLCAVCYDPFRDAVTLRCGHNFCRGCVSRCWEVQVSPTCPVCKDRASPADLRTNHTLNNLVEKLLREEAEGARWTSYRFSRVCRLHRGQLSLFCLEDKELLCCSCQADPRHQGHRVQPVKDTAHDFRAKCRNMEHALREKAKAFWAMRRSYEAIAKHNQVEAAWLEGRIRQEFDKLREFLRVEEQAILDAMAEETRQKQLLADEKMKQLTEETEVLAHEIERLQMEMKEDDVSFLMKHKSRKRRLFCTMEPEPVQPGMLIDVCKYLGSLQYRVWKKMLASVELPFSFDPNTAAGWLSVSDDLTSVTNHGYRVQVENPERFSSAPCLLGSRVFSQGSHAWEVALGGLQSWRVGVVRVRQDSGAEGHSHSCYHDTRSGFWYVCRTQGVEGDHCVTSDPATSPLVLAIPRRLRVELECEEGELSFYDAERHCHLYTFHARFGEVRPYFYLGGARGAGPPEPLRICPLHISVKEELDG.

Met1 is subject to N-acetylmethionine. Phosphoserine is present on residues Ser4 and Ser8. Residues 21–61 (CAVCYDPFRDAVTLRCGHNFCRGCVSRCWEVQVSPTCPVCK) form an RING-type zinc finger. The B box-type zinc-finger motif lies at 96-137 (RFSRVCRLHRGQLSLFCLEDKELLCCSCQADPRHQGHRVQPV). The Zn(2+) site is built by Cys101, His104, Cys123, and His129. A coiled-coil region spans residues 210–249 (AEETRQKQLLADEKMKQLTEETEVLAHEIERLQMEMKEDD). The B30.2/SPRY domain occupies 283–486 (YLGSLQYRVW…LRICPLHISV (204 aa)).

In terms of assembly, interacts with PKM isoform M2, but not isoform M1; this interaction may compete with that between PKM and FGFR1, and hence reduces FGFR1-dependent tyrosine phosphorylation of PKM. Interacts with IRF7; this interaction promotes IRF7 proteasomal degradation. Interacts with TRAF3; this interaction promotes TRAF3 activation.

The protein localises to the cytoplasm. The protein resides in the nucleus. The enzyme catalyses S-ubiquitinyl-[E2 ubiquitin-conjugating enzyme]-L-cysteine + [acceptor protein]-L-lysine = [E2 ubiquitin-conjugating enzyme]-L-cysteine + N(6)-ubiquitinyl-[acceptor protein]-L-lysine.. It functions in the pathway protein modification; protein ubiquitination. In terms of biological role, E3 ubiquitin-protein ligase that participates in multiple biological processes including cell death, glucose metabolism, and in particular, the innate immune response. Mediates 'Lys-63'-linked polyubiquitination of TRAF3 thereby promoting type I interferon production via RIG-I signaling pathway. Can also catalyze 'Lys-48'-linked polyubiquitination and proteasomal degradation of viral proteins such as influenza virus PB2. Acts as a negative feedback regulator of TLR7- and TLR9-triggered signaling. Mechanistically, promotes the 'Lys-48'-linked ubiquitination of IRF7 and induces its degradation via a proteasome-dependent pathway. Reduces FGFR1-dependent tyrosine phosphorylation of PKM, inhibiting PKM-dependent lactate production, glucose metabolism, and cell growth. The protein is E3 ubiquitin-protein ligase TRIM35 (TRIM35) of Pongo abelii (Sumatran orangutan).